The primary structure comprises 204 residues: Holliday junction branch migration complex subunit RuvA (204 aa).

A domain I region spans residues 1–64 (MIGKLKGTID…EDQLKLFGFM (64 aa)). Residues 65 to 143 (TALEREWFNL…AFAGEAINIA (79 aa)) are domain II. The tract at residues 144–151 (LKQELGEG) is flexible linker. The domain III stretch occupies residues 152-204 (VAAAPVADAVSALTNLGYSRDQAANAVAAAMKTAGDGADSAKLIRLGLKELAR).

This sequence belongs to the RuvA family. In terms of assembly, homotetramer. Forms an RuvA(8)-RuvB(12)-Holliday junction (HJ) complex. HJ DNA is sandwiched between 2 RuvA tetramers; dsDNA enters through RuvA and exits via RuvB. An RuvB hexamer assembles on each DNA strand where it exits the tetramer. Each RuvB hexamer is contacted by two RuvA subunits (via domain III) on 2 adjacent RuvB subunits; this complex drives branch migration. In the full resolvosome a probable DNA-RuvA(4)-RuvB(12)-RuvC(2) complex forms which resolves the HJ.

It is found in the cytoplasm. Its function is as follows. The RuvA-RuvB-RuvC complex processes Holliday junction (HJ) DNA during genetic recombination and DNA repair, while the RuvA-RuvB complex plays an important role in the rescue of blocked DNA replication forks via replication fork reversal (RFR). RuvA specifically binds to HJ cruciform DNA, conferring on it an open structure. The RuvB hexamer acts as an ATP-dependent pump, pulling dsDNA into and through the RuvAB complex. HJ branch migration allows RuvC to scan DNA until it finds its consensus sequence, where it cleaves and resolves the cruciform DNA. In Rhizobium etli (strain CIAT 652), this protein is Holliday junction branch migration complex subunit RuvA.